The primary structure comprises 99 residues: Integration host factor subunit alpha (99 aa).

The interval 49-75 (FGNFDLRDKNQRPGRNPKTGEDIPITA) is disordered.

It belongs to the bacterial histone-like protein family. In terms of assembly, heterodimer of an alpha and a beta chain.

In terms of biological role, this protein is one of the two subunits of integration host factor, a specific DNA-binding protein that functions in genetic recombination as well as in transcriptional and translational control. The polypeptide is Integration host factor subunit alpha (Klebsiella pneumoniae (strain 342)).